The sequence spans 164 residues: Glutaredoxin-2, mitochondrial (164 aa).

The transit peptide at 1-19 directs the protein to the mitochondrion; the sequence is MIWRRAALAGTRLVWSRSG. Ser-20 is modified (phosphoserine). The 101-residue stretch at 57-157 folds into the Glutaredoxin domain; it reads VNQIQETISD…PLVHQCYLKK (101 aa). Residue Cys-68 coordinates [2Fe-2S] cluster. Position 74 (Lys-74) interacts with glutathione. Residue Cys-77 is modified to S-glutathionyl cysteine; alternate. Cysteines 77 and 80 form a disulfide. 2 residues coordinate glutathione: Gln-109 and Val-121. Cys-153 provides a ligand contact to [2Fe-2S] cluster.

This sequence belongs to the glutaredoxin family. Monomer; active form. Homodimer; inactive form. The homodimer is probably linked by 1 2Fe-2S cluster. In terms of tissue distribution, widely expressed. Expressed in brain, heart, skeletal muscle, colon, thymus, spleen, kidney, liver, small intestine, placenta and lung. Not expressed in peripheral blood leukocytes.

The protein resides in the mitochondrion. Its subcellular location is the nucleus. The 2Fe-2S present in the homodimer leads to inactivation of the enzyme. The 2Fe-2S may serve as a redox sensor: the presence of one-electron oxidants or reductants leading to the loss of the 2Fe-2S cluster, subsequent monomerization and activation of the enzyme. Unlike other glutaredoxins, it is not inhibited by oxidation of structural Cys residues. In terms of biological role, glutathione-dependent oxidoreductase that facilitates the maintenance of mitochondrial redox homeostasis upon induction of apoptosis by oxidative stress. Involved in response to hydrogen peroxide and regulation of apoptosis caused by oxidative stress. Acts as a very efficient catalyst of monothiol reactions because of its high affinity for protein glutathione-mixed disulfides. Can receive electrons not only from glutathione (GSH), but also from thioredoxin reductase supporting both monothiol and dithiol reactions. Efficiently catalyzes both glutathionylation and deglutathionylation of mitochondrial complex I, which in turn regulates the superoxide production by the complex. Overexpression decreases the susceptibility to apoptosis and prevents loss of cardiolipin and cytochrome c release. The chain is Glutaredoxin-2, mitochondrial (GLRX2) from Homo sapiens (Human).